We begin with the raw amino-acid sequence, 336 residues long: MPQDVDFHIPFPSRRSPDFERARADHLSWPRALGLIGTDAAAERHSRGGYADLAARFYPSATGADLDLGVDLMSWFFLFDDLFDGPRGEDPQETRKLTDAVAAALDGPLPTSAPPIAHGFADVWRRTCQGMSPAWRARSARHWRNYFSGYVDEAVSRHLNTPYDSAGHYLAMRRQTIGVQPTVDLAERSCHCEVPQRVFDSAVLFAMLQIATDTNLILNDIASLEKEEARGELNNMVFILMREHGWTRGRSIAHMQDGVRTRLEQFLLLEACLPKVYDTFELTAQERESAEKYRMDGVRSVIRGSYDWHRSSGRYAADYAIAASYQGYLEELGSTL.

Mg(2+) contacts are provided by Asp80, Asp84, Asn219, Ser223, and Glu227. Residues 80-84 (DDLFD) carry the DDXXD motif motif.

The protein belongs to the terpene synthase family. In terms of assembly, monomer. It depends on Mg(2+) as a cofactor.

It carries out the reaction (2E,6E)-farnesyl diphosphate = pentalenene + diphosphate. The protein operates within antibiotic biosynthesis; neopentalenolactone biosynthesis. Functionally, catalyzes the cyclization of farnesyl diphosphate (FPP) to the tricyclic sesquiterpene pentalenene in the biosynthesis of neopentalenolactone antibiotic. This Streptomyces avermitilis (strain ATCC 31267 / DSM 46492 / JCM 5070 / NBRC 14893 / NCIMB 12804 / NRRL 8165 / MA-4680) protein is Pentalenene synthase (ptlA).